The chain runs to 478 residues: Cysteine--tRNA ligase (478 aa).

A Zn(2+)-binding site is contributed by cysteine 27. A 'HIGH' region motif is present at residues 29–39; sequence PTTYNFIHLGN. Positions 207, 232, and 236 each coordinate Zn(2+). The 'KMSKS' region signature appears at 264–268; sequence KMSKS. Lysine 267 lines the ATP pocket.

It belongs to the class-I aminoacyl-tRNA synthetase family. As to quaternary structure, monomer. Zn(2+) is required as a cofactor.

The protein resides in the cytoplasm. The enzyme catalyses tRNA(Cys) + L-cysteine + ATP = L-cysteinyl-tRNA(Cys) + AMP + diphosphate. This Desulforudis audaxviator (strain MP104C) protein is Cysteine--tRNA ligase.